A 307-amino-acid chain; its full sequence is MKKLRIGVVGLGGIAQKAWLPVLAAASDWTLQGAWSPTRAKALPICESWRIPYADSLSSLAASCDAVFVHSSTASHFDVVSTLLNAGVHVCVDKPLAENLRDAERLVELAARKKLTLMVGFNRRFAPLYGELKTQLATAASLRMDKHRSNSVGPHDLYFTLLDDYLHVVDTALWLSGGKASLDGGTLLTNDAGEMLFAEHHFSAGPLQITTCMHRRAGSQRETVQAVTDGALIDITDMREWREERGQGVVHKPIPGWQSTLEQRGFVGCARHFIECVQNQTVPQTAGEQAVLAQRIVDKIWRDAMSE.

Belongs to the Gfo/Idh/MocA family.

In Escherichia coli (strain K12), this protein is Putative oxidoreductase YceM (yceM).